The chain runs to 203 residues: Peptidyl-tRNA hydrolase (203 aa).

Tyrosine 18 contacts tRNA. The Proton acceptor role is filled by histidine 23. The tRNA site is built by phenylalanine 69, asparagine 71, and asparagine 117.

The protein belongs to the PTH family. Monomer.

The protein localises to the cytoplasm. It carries out the reaction an N-acyl-L-alpha-aminoacyl-tRNA + H2O = an N-acyl-L-amino acid + a tRNA + H(+). Its function is as follows. Hydrolyzes ribosome-free peptidyl-tRNAs (with 1 or more amino acids incorporated), which drop off the ribosome during protein synthesis, or as a result of ribosome stalling. In terms of biological role, catalyzes the release of premature peptidyl moieties from peptidyl-tRNA molecules trapped in stalled 50S ribosomal subunits, and thus maintains levels of free tRNAs and 50S ribosomes. In Prochlorococcus marinus subsp. pastoris (strain CCMP1986 / NIES-2087 / MED4), this protein is Peptidyl-tRNA hydrolase.